The sequence spans 371 residues: Chaperone protein DnaJ (371 aa).

The J domain maps to 5–69 (DYYEILGIAK…QKRAAYDQHG (65 aa)). The CR-type zinc-finger motif lies at 127–205 (GASKEIHITT…CRGQGKVEEP (79 aa)). Cys-140, Cys-143, Cys-157, Cys-160, Cys-179, Cys-182, Cys-193, and Cys-196 together coordinate Zn(2+). CXXCXGXG motif repeat units follow at residues 140–147 (CEHCKGSG), 157–164 (CTTCRGVG), 179–186 (CPRCHGQG), and 193–200 (CRQCRGQG).

This sequence belongs to the DnaJ family. Homodimer. Zn(2+) serves as cofactor.

Its subcellular location is the cytoplasm. In terms of biological role, participates actively in the response to hyperosmotic and heat shock by preventing the aggregation of stress-denatured proteins and by disaggregating proteins, also in an autonomous, DnaK-independent fashion. Unfolded proteins bind initially to DnaJ; upon interaction with the DnaJ-bound protein, DnaK hydrolyzes its bound ATP, resulting in the formation of a stable complex. GrpE releases ADP from DnaK; ATP binding to DnaK triggers the release of the substrate protein, thus completing the reaction cycle. Several rounds of ATP-dependent interactions between DnaJ, DnaK and GrpE are required for fully efficient folding. Also involved, together with DnaK and GrpE, in the DNA replication of plasmids through activation of initiation proteins. The protein is Chaperone protein DnaJ of Hamiltonella defensa subsp. Acyrthosiphon pisum (strain 5AT).